Here is a 384-residue protein sequence, read N- to C-terminus: UPF0284 protein alr0297 (384 aa).

Belongs to the UPF0284 family.

In Nostoc sp. (strain PCC 7120 / SAG 25.82 / UTEX 2576), this protein is UPF0284 protein alr0297.